The primary structure comprises 263 residues: 4-hydroxy-tetrahydrodipicolinate reductase (263 aa).

NAD(+) contacts are provided by residues 8-13 (GACGKM), Asp34, 97-99 (GTT), and 123-126 (APNF). The Proton donor/acceptor role is filled by His153. (S)-2,3,4,5-tetrahydrodipicolinate is bound at residue His154. The active-site Proton donor is Lys157. 163-164 (GT) provides a ligand contact to (S)-2,3,4,5-tetrahydrodipicolinate.

This sequence belongs to the DapB family.

It is found in the cytoplasm. The enzyme catalyses (S)-2,3,4,5-tetrahydrodipicolinate + NAD(+) + H2O = (2S,4S)-4-hydroxy-2,3,4,5-tetrahydrodipicolinate + NADH + H(+). The catalysed reaction is (S)-2,3,4,5-tetrahydrodipicolinate + NADP(+) + H2O = (2S,4S)-4-hydroxy-2,3,4,5-tetrahydrodipicolinate + NADPH + H(+). It participates in amino-acid biosynthesis; L-lysine biosynthesis via DAP pathway; (S)-tetrahydrodipicolinate from L-aspartate: step 4/4. Catalyzes the conversion of 4-hydroxy-tetrahydrodipicolinate (HTPA) to tetrahydrodipicolinate. This chain is 4-hydroxy-tetrahydrodipicolinate reductase, found in Carboxydothermus hydrogenoformans (strain ATCC BAA-161 / DSM 6008 / Z-2901).